The sequence spans 123 residues: Methicillin resistance regulatory protein MecI (123 aa).

Residues 7–71 (EISSAEWEVM…KDNKIFQYYS (65 aa)) constitute a DNA-binding region (H-T-H motif). The important for dimerization stretch occupies residues 74 to 123 (EESDIKYKTSKNFINKVYKGGFNSLVLNFVEKEDLSQDEIEELRNILNKK).

It belongs to the BlaI transcriptional regulatory family. In terms of assembly, monomer and homodimer. Post-translationally, upon exposure to beta-lactams, proteolytic cleavage at a single site impairs dimerization and abolishes repressor activity.

The protein localises to the cytoplasm. Its function is as follows. Transcriptional repressor that constitutively blocks the transcription of the gene for the penicillin-binding protein MecA. Binds palindromic DNA with the sequence 5'-TACA-[AT]-N-TGTA-3'. Regulates genes involved in antibiotic resistance. Binds DNA as a dimer. This is Methicillin resistance regulatory protein MecI (mecI) from Staphylococcus aureus (strain N315).